A 614-amino-acid polypeptide reads, in one-letter code: Chaperone protein DnaK (614 aa).

Threonine 173 carries the phosphothreonine; by autocatalysis modification. Basic and acidic residues-rich tracts occupy residues 490-509 and 529-542; these read EENA…RNEA and EEDK…KEAL. 3 disordered regions span residues 490-510, 524-555, and 575-614; these read EENA…NEAD, GENI…DDIK, and QAAQ…DNQK. Residues 575–584 show a composition bias toward low complexity; that stretch reads QAAQAQQQAQ. The segment covering 599-614 has biased composition (basic and acidic residues); that stretch reads ADFKEVKDDDNQDNQK.

Belongs to the heat shock protein 70 family.

In terms of biological role, acts as a chaperone. The chain is Chaperone protein DnaK from Staphylococcus saprophyticus subsp. saprophyticus (strain ATCC 15305 / DSM 20229 / NCIMB 8711 / NCTC 7292 / S-41).